A 264-amino-acid polypeptide reads, in one-letter code: Virulence plasmid protein pGP3-D (264 aa).

The polypeptide is Virulence plasmid protein pGP3-D (Chlamydia muridarum (strain MoPn / Nigg)).